A 463-amino-acid chain; its full sequence is Fumarate hydratase class II (463 aa).

Substrate-binding positions include 95-97 (SGT), 126-129 (HPND), 136-138 (SSN), and threonine 184. Histidine 185 acts as the Proton donor/acceptor in catalysis. Serine 315 is a catalytic residue. Substrate-binding positions include serine 316 and 321-323 (KIN).

The protein belongs to the class-II fumarase/aspartase family. Fumarase subfamily. Homotetramer.

Its subcellular location is the cytoplasm. The catalysed reaction is (S)-malate = fumarate + H2O. It participates in carbohydrate metabolism; tricarboxylic acid cycle; (S)-malate from fumarate: step 1/1. Involved in the TCA cycle. Catalyzes the stereospecific interconversion of fumarate to L-malate. The chain is Fumarate hydratase class II from Chlamydia trachomatis serovar D (strain ATCC VR-885 / DSM 19411 / UW-3/Cx).